A 594-amino-acid chain; its full sequence is Arginine--tRNA ligase (594 aa).

A 'HIGH' region motif is present at residues 139 to 149; the sequence is ANPTGPLHVGH.

The protein belongs to the class-I aminoacyl-tRNA synthetase family. Monomer.

The protein localises to the cytoplasm. It carries out the reaction tRNA(Arg) + L-arginine + ATP = L-arginyl-tRNA(Arg) + AMP + diphosphate. This is Arginine--tRNA ligase from Paraburkholderia phymatum (strain DSM 17167 / CIP 108236 / LMG 21445 / STM815) (Burkholderia phymatum).